The chain runs to 250 residues: 5'/3'-nucleotidase SurE (250 aa).

4 residues coordinate a divalent metal cation: aspartate 8, aspartate 9, serine 39, and asparagine 92.

The protein belongs to the SurE nucleotidase family. Requires a divalent metal cation as cofactor.

The protein resides in the cytoplasm. It catalyses the reaction a ribonucleoside 5'-phosphate + H2O = a ribonucleoside + phosphate. It carries out the reaction a ribonucleoside 3'-phosphate + H2O = a ribonucleoside + phosphate. The catalysed reaction is [phosphate](n) + H2O = [phosphate](n-1) + phosphate + H(+). Its function is as follows. Nucleotidase with a broad substrate specificity as it can dephosphorylate various ribo- and deoxyribonucleoside 5'-monophosphates and ribonucleoside 3'-monophosphates with highest affinity to 3'-AMP. Also hydrolyzes polyphosphate (exopolyphosphatase activity) with the preference for short-chain-length substrates (P20-25). Might be involved in the regulation of dNTP and NTP pools, and in the turnover of 3'-mononucleotides produced by numerous intracellular RNases (T1, T2, and F) during the degradation of various RNAs. This chain is 5'/3'-nucleotidase SurE, found in Wigglesworthia glossinidia brevipalpis.